The sequence spans 223 residues: NAD(P)H-hydrate epimerase (223 aa).

The region spanning 9 to 209 (MQKIDTYTVN…DIGLLTPPDF (201 aa)) is the YjeF N-terminal domain. 57–61 (NNGAD) lines the (6S)-NADPHX pocket. Asn-58 and Asp-119 together coordinate K(+). Residues 123–129 (GTGLNNL) and Asp-152 contribute to the (6S)-NADPHX site. Thr-155 is a binding site for K(+).

It belongs to the NnrE/AIBP family. K(+) serves as cofactor.

The catalysed reaction is (6R)-NADHX = (6S)-NADHX. It catalyses the reaction (6R)-NADPHX = (6S)-NADPHX. Catalyzes the epimerization of the S- and R-forms of NAD(P)HX, a damaged form of NAD(P)H that is a result of enzymatic or heat-dependent hydration. This is a prerequisite for the S-specific NAD(P)H-hydrate dehydratase to allow the repair of both epimers of NAD(P)HX. The protein is NAD(P)H-hydrate epimerase of Leuconostoc gelidum subsp. gasicomitatum (strain DSM 15947 / CCUG 46042 / CECT 5767 / JCM 12535 / LMG 18811 / NBRC 113245 / TB1-10) (Leuconostoc gasicomitatum).